A 361-amino-acid polypeptide reads, in one-letter code: Phospho-N-acetylmuramoyl-pentapeptide-transferase (361 aa).

10 consecutive transmembrane segments (helical) span residues 25 to 45 (TGGAVVTGALFVFLCGPWIIN), 72 to 92 (TPTMGGLMILSGLTVGTVLWA), 95 to 115 (VNPYVWIVLAVTLGFGFVGFY), 133 to 153 (TRLLIEFAIAGAACFALVWLG), 169 to 189 (VVLNLGWYFVIFGAFVIVGAG), 200 to 220 (GLAIVPVMIAAASFGLIAYLA), 240 to 260 (LAVLCGALLGAGLGFLWFNAP), 264 to 284 (IFMGDTGSLALGGMLGSIAVA), 289 to 309 (IVLAVIGGLFVLEAVSVIVQV), and 338 to 358 (QIVIRFWIIAVMLALAGLATL).

The protein belongs to the glycosyltransferase 4 family. MraY subfamily. The cofactor is Mg(2+).

It is found in the cell inner membrane. The enzyme catalyses UDP-N-acetyl-alpha-D-muramoyl-L-alanyl-gamma-D-glutamyl-meso-2,6-diaminopimeloyl-D-alanyl-D-alanine + di-trans,octa-cis-undecaprenyl phosphate = di-trans,octa-cis-undecaprenyl diphospho-N-acetyl-alpha-D-muramoyl-L-alanyl-D-glutamyl-meso-2,6-diaminopimeloyl-D-alanyl-D-alanine + UMP. The protein operates within cell wall biogenesis; peptidoglycan biosynthesis. Functionally, catalyzes the initial step of the lipid cycle reactions in the biosynthesis of the cell wall peptidoglycan: transfers peptidoglycan precursor phospho-MurNAc-pentapeptide from UDP-MurNAc-pentapeptide onto the lipid carrier undecaprenyl phosphate, yielding undecaprenyl-pyrophosphoryl-MurNAc-pentapeptide, known as lipid I. The polypeptide is Phospho-N-acetylmuramoyl-pentapeptide-transferase (Rhodopseudomonas palustris (strain BisB5)).